The sequence spans 409 residues: uncharacterized protein (409 aa).

An N-terminal signal peptide occupies residues 1 to 39 (MVSDSKLELPLPVNQQKPRRRRILKVHLLIAALILSAVG). Histidine 67, aspartate 69, glutamate 181, histidine 250, and histidine 271 together coordinate Zn(2+).

This sequence belongs to the metallo-dependent hydrolases superfamily. Peptidase M19 family. Interacts with dil1. Requires Zn(2+) as cofactor.

The catalysed reaction is an L-aminoacyl-L-amino acid + H2O = 2 an L-alpha-amino acid. This is an uncharacterized protein from Schizosaccharomyces pombe (strain 972 / ATCC 24843) (Fission yeast).